The sequence spans 586 residues: A-type ATP synthase subunit A (586 aa).

Residue 238 to 245 participates in ATP binding; it reads GPFGSGKT.

The protein belongs to the ATPase alpha/beta chains family. In terms of assembly, has multiple subunits with at least A(3), B(3), C, D, E, F, H, I and proteolipid K(x).

The protein resides in the cell membrane. It carries out the reaction ATP + H2O + 4 H(+)(in) = ADP + phosphate + 5 H(+)(out). Functionally, component of the A-type ATP synthase that produces ATP from ADP in the presence of a proton gradient across the membrane. The A chain is the catalytic subunit. This chain is A-type ATP synthase subunit A, found in Haloferax volcanii (strain ATCC 29605 / DSM 3757 / JCM 8879 / NBRC 14742 / NCIMB 2012 / VKM B-1768 / DS2) (Halobacterium volcanii).